A 358-amino-acid polypeptide reads, in one-letter code: MKPFPRAEISRKALKHNLARLHELAPSSKVMAVVKANGYGHGLLNVAQCLDNADGFGLARLEEALALRTGGVTAKLLLLEGFFRIGDLTTLVEHDIETVVHHESQLEMLESINLTKPVTVWLKVDSGMHRLGFSPAQFDATYQRLMANDNVAKPIHLMTHFACADEPSNPSTAEQQRVFDTLIKGLPGDRTLANSAGALFWQQSQADWIRPGIALYGVSPVFGDLGAKHGLMPAMDLVSQLIAIREHKAGESAGYGSYWTAEKDTNLGVVAIGYGDGYPRNAPLGTPVLVNGRIVPIVGRVSMDMLTVDLGIDANDKVGDLAVLWGKELPVEEVAEHIGTIAYELVTKLTPRVAVCLD.

Lys35 serves as the catalytic Proton acceptor; specific for D-alanine. N6-(pyridoxal phosphate)lysine is present on Lys35. A substrate-binding site is contributed by Arg130. Tyr255 serves as the catalytic Proton acceptor; specific for L-alanine. Substrate is bound at residue Met303.

Belongs to the alanine racemase family. Requires pyridoxal 5'-phosphate as cofactor.

It carries out the reaction L-alanine = D-alanine. Its pathway is amino-acid biosynthesis; D-alanine biosynthesis; D-alanine from L-alanine: step 1/1. Functionally, catalyzes the interconversion of L-alanine and D-alanine. May also act on other amino acids. This Shewanella piezotolerans (strain WP3 / JCM 13877) protein is Alanine racemase (alr).